Consider the following 350-residue polypeptide: SUMO-activating enzyme subunit 1 (350 aa).

Residue methionine 1 is modified to N-acetylmethionine. Valine 2 carries the post-translational modification N-acetylvaline; in SUMO-activating enzyme subunit 1, N-terminally processed. Serine 16 is modified (phosphoserine). Lysine 202 bears the N6-acetyllysine mark.

This sequence belongs to the ubiquitin-activating E1 family. In terms of assembly, heterodimer of SAE1 and UBA2/SAE2. The heterodimer corresponds to the two domains that are encoded on a single polypeptide chain in ubiquitin-activating enzyme E1. Interacts with UBE2I. In terms of tissue distribution, broadly expressed, with highest levels in testis.

It is found in the nucleus. Its pathway is protein modification; protein sumoylation. In terms of biological role, the heterodimer acts as an E1 ligase for SUMO1, SUMO2, SUMO3, and probably SUMO4. It mediates ATP-dependent activation of SUMO proteins followed by formation of a thioester bond between a SUMO protein and a conserved active site cysteine residue on UBA2/SAE2. The sequence is that of SUMO-activating enzyme subunit 1 (Sae1) from Mus musculus (Mouse).